Here is a 440-residue protein sequence, read N- to C-terminus: tRNA modification GTPase MnmE (440 aa).

(6S)-5-formyl-5,6,7,8-tetrahydrofolate is bound by residues Arg22, Glu79, and Lys118. The 153-residue stretch at 214 to 366 folds into the TrmE-type G domain; it reads GLIFTILGKP…LKTMLEAEAR (153 aa). GTP is bound by residues 224–229, 243–249, and 268–271; these read NAGKSS, SSQPGTT, and DTAG. The Mg(2+) site is built by Ser228 and Thr249. Residue Lys440 coordinates (6S)-5-formyl-5,6,7,8-tetrahydrofolate.

The protein belongs to the TRAFAC class TrmE-Era-EngA-EngB-Septin-like GTPase superfamily. TrmE GTPase family. In terms of assembly, homodimer. Heterotetramer of two MnmE and two MnmG subunits. It depends on K(+) as a cofactor.

The protein resides in the cytoplasm. Exhibits a very high intrinsic GTPase hydrolysis rate. Involved in the addition of a carboxymethylaminomethyl (cmnm) group at the wobble position (U34) of certain tRNAs, forming tRNA-cmnm(5)s(2)U34. The protein is tRNA modification GTPase MnmE of Granulibacter bethesdensis (strain ATCC BAA-1260 / CGDNIH1).